The primary structure comprises 610 residues: UvrABC system protein C (610 aa).

The region spanning 16–94 (SQPGVYRMYD…IKLYQPRYNV (79 aa)) is the GIY-YIG domain. Residues 204–239 (DQVLTQLISRMETASQNLEFEEAARIRDQIQAVRRV) form the UVR domain.

Belongs to the UvrC family. Interacts with UvrB in an incision complex.

The protein resides in the cytoplasm. In terms of biological role, the UvrABC repair system catalyzes the recognition and processing of DNA lesions. UvrC both incises the 5' and 3' sides of the lesion. The N-terminal half is responsible for the 3' incision and the C-terminal half is responsible for the 5' incision. The sequence is that of UvrABC system protein C from Escherichia coli O45:K1 (strain S88 / ExPEC).